The sequence spans 239 residues: Probable transcriptional regulatory protein BC_0539 (239 aa).

This sequence belongs to the TACO1 family. YeeN subfamily.

The protein resides in the cytoplasm. The polypeptide is Probable transcriptional regulatory protein BC_0539 (Bacillus cereus (strain ATCC 14579 / DSM 31 / CCUG 7414 / JCM 2152 / NBRC 15305 / NCIMB 9373 / NCTC 2599 / NRRL B-3711)).